Here is a 215-residue protein sequence, read N- to C-terminus: UPF0502 protein PP_2442 (215 aa).

Belongs to the UPF0502 family.

This chain is UPF0502 protein PP_2442, found in Pseudomonas putida (strain ATCC 47054 / DSM 6125 / CFBP 8728 / NCIMB 11950 / KT2440).